A 440-amino-acid polypeptide reads, in one-letter code: Lipopolysaccharide-processing protein LpsZ (440 aa).

To E.coli capsule polysaccharide export protein KpsC.

The protein resides in the cytoplasm. In terms of biological role, involved in the invasion of nitrogen fixation nodules. May be involved in the biosynthesis of lipopolysaccharides as an enzyme or a regulatory protein. This is Lipopolysaccharide-processing protein LpsZ (lpsZ) from Rhizobium meliloti (Ensifer meliloti).